The primary structure comprises 240 residues: Ribosomal RNA large subunit methyltransferase E (240 aa).

The span at 1-13 (MAKKPGSQNTSGR) shows a compositional bias: polar residues. The tract at residues 1 to 20 (MAKKPGSQNTSGRGQRDLKV) is disordered. Residues G85, W87, D113, D129, and D153 each contribute to the S-adenosyl-L-methionine site. K193 functions as the Proton acceptor in the catalytic mechanism.

Belongs to the class I-like SAM-binding methyltransferase superfamily. RNA methyltransferase RlmE family.

Its subcellular location is the cytoplasm. The enzyme catalyses uridine(2552) in 23S rRNA + S-adenosyl-L-methionine = 2'-O-methyluridine(2552) in 23S rRNA + S-adenosyl-L-homocysteine + H(+). Functionally, specifically methylates the uridine in position 2552 of 23S rRNA at the 2'-O position of the ribose in the fully assembled 50S ribosomal subunit. In Roseobacter denitrificans (strain ATCC 33942 / OCh 114) (Erythrobacter sp. (strain OCh 114)), this protein is Ribosomal RNA large subunit methyltransferase E.